A 2633-amino-acid polypeptide reads, in one-letter code: Non-reducing polyketide synthase sor2 (2633 aa).

Positions 67–237 are N-terminal acylcarrier protein transacylase domain (SAT); that stretch reads VSNAQKLAEW…TTSTRTVAAL (171 aa). Cys-140 functions as the Nucleophile; for transacylase activity in the catalytic mechanism. His-258 serves as the catalytic Proton donor/acceptor; for transacylase activity. Positions 389–814 constitute a Ketosynthase family 3 (KS3) domain; sequence ENDIAVIGMA…GSNASVIIKQ (426 aa). Catalysis depends on for beta-ketoacyl synthase activity residues Cys-561, His-696, and His-737. The segment at 928–1239 is malonyl-CoA:ACP transacylase (MAT) domain; sequence CFGGQVSTFV…SKASSQLSDV (312 aa). Positions 1307-1437 are N-terminal hotdog fold; sequence PQPVGLYTLL…GQLHFQASDD (131 aa). Positions 1307–1627 constitute a PKS/mFAS DH domain; sequence PQPVGLYTLL…YAPVSLDQLF (321 aa). A product template (PT) domain region spans residues 1338 to 1509; sequence MSDHAIGKAQ…SNESAGRLVR (172 aa). Residues 1464–1627 are C-terminal hotdog fold; the sequence is GRSDEVIQGQ…YAPVSLDQLF (164 aa). Residues 1684 to 1758 enclose the Carrier domain; sequence EELWLRLRPV…GILKFLQSTL (75 aa). O-(pantetheine 4'-phosphoryl)serine is present on Ser-1718. A disordered region spans residues 1762-1792; that stretch reads DVHDSSETMSTVSSDGNVHSPPTSGSEMASP. A compositionally biased stretch (polar residues) spans 1768 to 1790; it reads ETMSTVSSDGNVHSPPTSGSEMA. The interval 1982 to 2166 is methyltransferase domain; that stretch reads FELMADFLTR…ASGFKHVRWT (185 aa). Residues 2253–2495 are NADPH-binding (R) domain; the sequence is VTGATGSLGS…TLRALPDVDG (243 aa).

Pantetheine 4'-phosphate is required as a cofactor.

It functions in the pathway secondary metabolite biosynthesis. Its function is as follows. Non-reducing polyketide synthase; part of the SOR gene cluster that mediates the biosynthesis of sorbicillinoids, a diverse group of yellow secondary metabolites that restrict growth of competing pathogenic fungi but not of bacteria. Sorbicillinoids biosynthesis requires the action of two PKSs. The SOR cluster is required for the production of trichodimerol and dihydrotrichotetronin, with sor2 being sufficient for production of trichodimerol, but not dihydrotrichotetronin in the light. Sor1 iteratively combines three acetyl units and the growing chain is modified by the ketoacyl reductase subunit, and optional by the enoyl reductase subunit in the second cycle. The polyketide is then handed over to the PKS sor2, which adds three more acetyl units, and two methyl groups. Sor2 releases an aldehyde, which undergoes spontaneous cyclization resulting in the formation of sorbicillin or 2',3'-dihydrosorbicillin. The monooxygenase sor5 oxidizes sorbicillin and 2',3'-dihydrosorbicillin to 2',3'-dihydrosorbicillinol and sorbicillinol, respectively. The oxidoreductase sor8 further converts sorbicillinol into oxosorbicillinol. Sorbicillinol is the building block for the other sorbicillinoids such as disorbicillinol, bisvertinolon, dihydrobisvertinolone, and dihydrotrichotetronine. This Hypocrea jecorina (strain QM6a) (Trichoderma reesei) protein is Non-reducing polyketide synthase sor2.